Here is a 417-residue protein sequence, read N- to C-terminus: Tyrosine--tRNA ligase (417 aa).

Tyr39 is an L-tyrosine binding site. A 'HIGH' region motif is present at residues 44–53 (CTAPSLHVGH). Residues Tyr176 and Gln180 each contribute to the L-tyrosine site. The 'KMSKS' region signature appears at 236–240 (KMGKT). An ATP-binding site is contributed by Lys239. The S4 RNA-binding domain occupies 350–417 (AGVLALFVKA…KKRHVLLRPA (68 aa)).

Belongs to the class-I aminoacyl-tRNA synthetase family. TyrS type 1 subfamily. As to quaternary structure, homodimer.

The protein localises to the cytoplasm. The catalysed reaction is tRNA(Tyr) + L-tyrosine + ATP = L-tyrosyl-tRNA(Tyr) + AMP + diphosphate + H(+). Functionally, catalyzes the attachment of tyrosine to tRNA(Tyr) in a two-step reaction: tyrosine is first activated by ATP to form Tyr-AMP and then transferred to the acceptor end of tRNA(Tyr). This Nitrobacter winogradskyi (strain ATCC 25391 / DSM 10237 / CIP 104748 / NCIMB 11846 / Nb-255) protein is Tyrosine--tRNA ligase.